A 113-amino-acid polypeptide reads, in one-letter code: Parvalbumin beta (113 aa).

N-acetylalanine is present on alanine 1. S-linked (Glc) cysteine glycosylation occurs at cysteine 18. 2 EF-hand domains span residues phenylalanine 38 to aspartate 73 and leucine 77 to lysine 112. Aspartate 51, aspartate 53, glutamate 55, phenylalanine 57, glutamate 59, glutamate 62, aspartate 90, aspartate 92, aspartate 94, lysine 96, and glutamate 101 together coordinate Ca(2+).

Belongs to the parvalbumin family. Muscle (at protein level).

Its function is as follows. In muscle, parvalbumin is thought to be involved in relaxation after contraction. It binds two calcium ions. The sequence is that of Parvalbumin beta from Gadus morhua subsp. callarias (Baltic cod).